The primary structure comprises 278 residues: Digeranylgeranylglyceryl phosphate synthase (278 aa).

Helical transmembrane passes span 12–32 (LKNC…ASYF), 34–54 (ISMI…CGFG), 91–111 (LLVV…LMAV), 142–162 (VFIF…LFLC), 204–224 (FLLV…FFGI), 226–246 (YLIS…NLVM), and 257–277 (SRNI…GSLF).

It belongs to the UbiA prenyltransferase family. DGGGP synthase subfamily. It depends on Mg(2+) as a cofactor.

The protein resides in the cell membrane. It carries out the reaction sn-3-O-(geranylgeranyl)glycerol 1-phosphate + (2E,6E,10E)-geranylgeranyl diphosphate = 2,3-bis-O-(geranylgeranyl)-sn-glycerol 1-phosphate + diphosphate. Its pathway is membrane lipid metabolism; glycerophospholipid metabolism. Prenyltransferase that catalyzes the transfer of the geranylgeranyl moiety of geranylgeranyl diphosphate (GGPP) to the C2 hydroxyl of (S)-3-O-geranylgeranylglyceryl phosphate (GGGP). This reaction is the second ether-bond-formation step in the biosynthesis of archaeal membrane lipids. This Methanococcus maripaludis (strain C6 / ATCC BAA-1332) protein is Digeranylgeranylglyceryl phosphate synthase.